Here is a 198-residue protein sequence, read N- to C-terminus: dTTP/UTP pyrophosphatase (198 aa).

The Proton acceptor role is filled by D69.

Belongs to the Maf family. YhdE subfamily. It depends on a divalent metal cation as a cofactor.

The protein localises to the cytoplasm. It catalyses the reaction dTTP + H2O = dTMP + diphosphate + H(+). The enzyme catalyses UTP + H2O = UMP + diphosphate + H(+). Its function is as follows. Nucleoside triphosphate pyrophosphatase that hydrolyzes dTTP and UTP. May have a dual role in cell division arrest and in preventing the incorporation of modified nucleotides into cellular nucleic acids. The protein is dTTP/UTP pyrophosphatase of Idiomarina loihiensis (strain ATCC BAA-735 / DSM 15497 / L2-TR).